The primary structure comprises 956 residues: Cytolysin RtxA (956 aa).

Residues 48-58 form a cholesterol recognition/amino acid consensus (CRAC) region 1 region; that stretch reads LTIPKDYDIEK. Cholesterol recognition/amino acid consensus (CARC) region stretches follow at residues 280 to 287 and 340 to 348; these read KAISSYVL and KFGYDGDSL. The tract at residues 349–354 is cholesterol recognition/amino acid consensus (CRAC) region 2; sequence LAEYQR. The cholesterol recognition/amino acid consensus (CARC) region 3 stretch occupies residues 444-453; the sequence is RHAHYLERNL. K558 is lipidated: N6-myristoyl lysine. The stretch at 613-639 is one Hemolysin-type calcium-binding 1 repeat; the sequence is VNAGSGNDDIFAGQGKMNVDGGTGHDR. A lipid anchor (N6-myristoyl lysine) is attached at K689. 2 Hemolysin-type calcium-binding repeats span residues 722-756 and 757-791; these read GSQF…DDRL and FGGN…GNDV.

Belongs to the RTX prokaryotic toxin (TC 1.C.11) family. In terms of processing, myristoylated by RtxC; the toxin only becomes active when modified. Mainly myristoylated; a very minor fraction is acylated with hydroxymyristoyl, lauroyl and palmitoleyl chains fatty acyl groups. Fatty acylation is involved in binding to host membranes and promotes the irreversible insertion of RtxA into the host cell membrane.

The protein resides in the secreted. It localises to the host cell membrane. Its function is as follows. Bacterial cytolysin that attacks host cell membranes and causes cell rupture by forming a pore. Binds and permeabilizes target cells by forming cation-selective pores. Constitutes the key virulence cytotoxin of K.kingae. Binds cholesterol and oligosaccharides on the surface of host cells. Does not bind beta-2 integrin (ITGB2) on the host cell surface. This is Cytolysin RtxA from Kingella kingae.